The sequence spans 502 residues: Tyrosine-protein kinase receptor old-1 (502 aa).

The signal sequence occupies residues methionine 1–cysteine 19. Topologically, residues asparagine 20 to valine 58 are extracellular. Residues isoleucine 59–isoleucine 79 traverse the membrane as a helical segment. Topologically, residues phenylalanine 80–serine 502 are cytoplasmic. A disordered region spans residues leucine 99–serine 140. A compositionally biased stretch (polar residues) spans serine 127–serine 140. Residues isoleucine 175–phenylalanine 473 form the Protein kinase domain. Residues leucine 181 to isoleucine 189 and lysine 213 contribute to the ATP site. The active-site Proton acceptor is aspartate 321.

This sequence belongs to the protein kinase superfamily. Tyr protein kinase family.

Its subcellular location is the cell membrane. The catalysed reaction is L-tyrosyl-[protein] + ATP = O-phospho-L-tyrosyl-[protein] + ADP + H(+). Its function is as follows. Receptor tyrosine kinase which plays a role in promoting longevity and resistance to stresses including UV irradiation and high temperatures, probably downstream of daf-16. In Caenorhabditis elegans, this protein is Tyrosine-protein kinase receptor old-1.